The primary structure comprises 339 residues: Ketol-acid reductoisomerase (NADP(+)) (339 aa).

The KARI N-terminal Rossmann domain occupies 1–182 (MRVYYDRDAD…GGGRAGIIET (182 aa)). Residues 24–27 (YGSQ), R48, S51, T53, and 83–86 (DELQ) contribute to the NADP(+) site. The active site involves H108. An NADP(+)-binding site is contributed by G134. One can recognise a KARI C-terminal knotted domain in the interval 183-328 (TFREECETDL…AKLREMMPWI (146 aa)). D191, E195, E227, and E231 together coordinate Mg(2+). Residue S252 coordinates substrate.

This sequence belongs to the ketol-acid reductoisomerase family. Mg(2+) is required as a cofactor.

It carries out the reaction (2R)-2,3-dihydroxy-3-methylbutanoate + NADP(+) = (2S)-2-acetolactate + NADPH + H(+). The enzyme catalyses (2R,3R)-2,3-dihydroxy-3-methylpentanoate + NADP(+) = (S)-2-ethyl-2-hydroxy-3-oxobutanoate + NADPH + H(+). It functions in the pathway amino-acid biosynthesis; L-isoleucine biosynthesis; L-isoleucine from 2-oxobutanoate: step 2/4. The protein operates within amino-acid biosynthesis; L-valine biosynthesis; L-valine from pyruvate: step 2/4. Functionally, involved in the biosynthesis of branched-chain amino acids (BCAA). Catalyzes an alkyl-migration followed by a ketol-acid reduction of (S)-2-acetolactate (S2AL) to yield (R)-2,3-dihydroxy-isovalerate. In the isomerase reaction, S2AL is rearranged via a Mg-dependent methyl migration to produce 3-hydroxy-3-methyl-2-ketobutyrate (HMKB). In the reductase reaction, this 2-ketoacid undergoes a metal-dependent reduction by NADPH to yield (R)-2,3-dihydroxy-isovalerate. This is Ketol-acid reductoisomerase (NADP(+)) from Rhodopseudomonas palustris (strain BisA53).